The following is a 406-amino-acid chain: WD repeat and SOCS box-containing protein 2 (406 aa).

Residues 70 to 89 (AKSRSSKNETKGRGSPKEKT) form a disordered region. 5 WD repeats span residues 107–150 (PPSK…LLLN), 153–193 (GHQD…KQIQ), 197–236 (GHLQ…LIRK), 239–278 (GHQS…RLRS), and 293–332 (VHIS…PIAF). Residues 358–406 (HVQFWTAPRVLSSLKHLCRKALRSFLTTYQVLALPIPKKMKEFLTYRTF) form the SOCS box domain.

Its pathway is protein modification; protein ubiquitination. In terms of biological role, may be a substrate-recognition component of a SCF-like ECS (Elongin-Cullin-SOCS-box protein) E3 ubiquitin ligase complex which mediates the ubiquitination and subsequent proteasomal degradation of target proteins. The chain is WD repeat and SOCS box-containing protein 2 (WSB2) from Bos taurus (Bovine).